An 818-amino-acid polypeptide reads, in one-letter code: Phenylalanine--tRNA ligase beta subunit (818 aa).

In terms of domain architecture, tRNA-binding spans 39 to 148 (AAELQKFEVA…EDAVVGENFT (110 aa)). The B5 domain maps to 423–498 (PQKKPLDFSA…RIYGYDKIES (76 aa)). Asp-476, Asp-482, Glu-485, and Glu-486 together coordinate Mg(2+). The FDX-ACB domain maps to 724–817 (SDFQANFRDY…IEQKFQGTLR (94 aa)).

Belongs to the phenylalanyl-tRNA synthetase beta subunit family. Type 1 subfamily. As to quaternary structure, tetramer of two alpha and two beta subunits. It depends on Mg(2+) as a cofactor.

The protein localises to the cytoplasm. It catalyses the reaction tRNA(Phe) + L-phenylalanine + ATP = L-phenylalanyl-tRNA(Phe) + AMP + diphosphate + H(+). This is Phenylalanine--tRNA ligase beta subunit from Rickettsia felis (strain ATCC VR-1525 / URRWXCal2) (Rickettsia azadi).